A 174-amino-acid chain; its full sequence is Ribosome maturation factor RimM (174 aa).

Residues 97-171 (SDGEYYWCDL…RMTVSLPEGL (75 aa)) enclose the PRC barrel domain.

Belongs to the RimM family. In terms of assembly, binds ribosomal protein uS19.

The protein resides in the cytoplasm. An accessory protein needed during the final step in the assembly of 30S ribosomal subunit, possibly for assembly of the head region. Essential for efficient processing of 16S rRNA. May be needed both before and after RbfA during the maturation of 16S rRNA. It has affinity for free ribosomal 30S subunits but not for 70S ribosomes. This is Ribosome maturation factor RimM from Geotalea daltonii (strain DSM 22248 / JCM 15807 / FRC-32) (Geobacter daltonii).